The following is a 78-amino-acid chain: Acyl carrier protein (78 aa).

Positions 2 to 77 (DELFLRMRAL…DAYEFIKSKV (76 aa)) constitute a Carrier domain. An O-(pantetheine 4'-phosphoryl)serine modification is found at Ser37.

Belongs to the acyl carrier protein (ACP) family. 4'-phosphopantetheine is transferred from CoA to a specific serine of apo-ACP by AcpS. This modification is essential for activity because fatty acids are bound in thioester linkage to the sulfhydryl of the prosthetic group.

Its subcellular location is the cytoplasm. It functions in the pathway lipid metabolism; fatty acid biosynthesis. Carrier of the growing fatty acid chain in fatty acid biosynthesis. The polypeptide is Acyl carrier protein (Treponema pallidum (strain Nichols)).